The following is a 342-amino-acid chain: N-acetyl-gamma-glutamyl-phosphate reductase (342 aa).

Cys-149 is an active-site residue.

Belongs to the NAGSA dehydrogenase family. Type 1 subfamily.

The protein localises to the cytoplasm. It catalyses the reaction N-acetyl-L-glutamate 5-semialdehyde + phosphate + NADP(+) = N-acetyl-L-glutamyl 5-phosphate + NADPH + H(+). It participates in amino-acid biosynthesis; L-arginine biosynthesis; N(2)-acetyl-L-ornithine from L-glutamate: step 3/4. In terms of biological role, catalyzes the NADPH-dependent reduction of N-acetyl-5-glutamyl phosphate to yield N-acetyl-L-glutamate 5-semialdehyde. The sequence is that of N-acetyl-gamma-glutamyl-phosphate reductase from Roseobacter denitrificans (strain ATCC 33942 / OCh 114) (Erythrobacter sp. (strain OCh 114)).